The following is a 736-amino-acid chain: Myotubularin-related protein 12 (736 aa).

Positions 182–558 (YLRSTNPEML…RQLSLPSSAF (377 aa)) constitute a Myotubularin phosphatase domain. The disordered stretch occupies residues 672–691 (SLATQPDHPPPLHHRLPSFG).

It belongs to the protein-tyrosine phosphatase family. Non-receptor class myotubularin subfamily. As to quaternary structure, heterodimer with lipid phosphatase mtm1. In skeletal muscles, the interaction stabilizes both mtmr12 and mtm1 protein levels.

The protein localises to the cytoplasm. The protein resides in the sarcoplasmic reticulum. Its subcellular location is the myofibril. It is found in the sarcomere. Functionally, acts as an adapter for the myotubularin phosphatase mtm1 to regulate mtm1 protein stability and possibly its intracellular location. By stabilizing mtm1 protein levels, required for skeletal muscle maintenance but not for myogenesis. In skeletal muscle cells, does not regulate mtm1 subcellular localization. The chain is Myotubularin-related protein 12 (mtmr12) from Danio rerio (Zebrafish).